Consider the following 457-residue polypeptide: Histidine--tRNA ligase (457 aa).

It belongs to the class-II aminoacyl-tRNA synthetase family. Homodimer.

Its subcellular location is the cytoplasm. It carries out the reaction tRNA(His) + L-histidine + ATP = L-histidyl-tRNA(His) + AMP + diphosphate + H(+). This Mesoplasma florum (strain ATCC 33453 / NBRC 100688 / NCTC 11704 / L1) (Acholeplasma florum) protein is Histidine--tRNA ligase.